A 217-amino-acid chain; its full sequence is IMPACT family member YvyE (217 aa).

Belongs to the IMPACT family.

The chain is IMPACT family member YvyE (yvyE) from Bacillus subtilis (strain 168).